The chain runs to 180 residues: ATP synthase subunit b (180 aa).

Residues 26-46 traverse the membrane as a helical segment; that stretch reads IPLMLATLAALVISIFFLTYF.

This sequence belongs to the ATPase B chain family. In terms of assembly, F-type ATPases have 2 components, F(1) - the catalytic core - and F(0) - the membrane proton channel. F(1) has five subunits: alpha(3), beta(3), gamma(1), delta(1), epsilon(1). F(0) has three main subunits: a(1), b(2) and c(10-14). The alpha and beta chains form an alternating ring which encloses part of the gamma chain. F(1) is attached to F(0) by a central stalk formed by the gamma and epsilon chains, while a peripheral stalk is formed by the delta and b chains.

It is found in the cell membrane. F(1)F(0) ATP synthase produces ATP from ADP in the presence of a proton or sodium gradient. F-type ATPases consist of two structural domains, F(1) containing the extramembraneous catalytic core and F(0) containing the membrane proton channel, linked together by a central stalk and a peripheral stalk. During catalysis, ATP synthesis in the catalytic domain of F(1) is coupled via a rotary mechanism of the central stalk subunits to proton translocation. Functionally, component of the F(0) channel, it forms part of the peripheral stalk, linking F(1) to F(0). This chain is ATP synthase subunit b, found in Mycoplasmopsis pulmonis (strain UAB CTIP) (Mycoplasma pulmonis).